A 367-amino-acid chain; its full sequence is UDP-N-acetylenolpyruvoylglucosamine reductase (367 aa).

Positions 29–205 (VGPVAQRVIT…LEVEFKLDAS (177 aa)) constitute an FAD-binding PCMH-type domain. Arginine 177 is an active-site residue. The Proton donor role is filled by serine 260. Glutamate 359 is a catalytic residue.

Belongs to the MurB family. FAD is required as a cofactor.

Its subcellular location is the cytoplasm. It carries out the reaction UDP-N-acetyl-alpha-D-muramate + NADP(+) = UDP-N-acetyl-3-O-(1-carboxyvinyl)-alpha-D-glucosamine + NADPH + H(+). It participates in cell wall biogenesis; peptidoglycan biosynthesis. In terms of biological role, cell wall formation. This is UDP-N-acetylenolpyruvoylglucosamine reductase from Mycobacterium leprae (strain Br4923).